The primary structure comprises 204 residues: FMN-dependent NADH:quinone oxidoreductase (204 aa).

Residues Ser-10 and 15–17 (SLS) contribute to the FMN site.

The protein belongs to the azoreductase type 1 family. In terms of assembly, homodimer. It depends on FMN as a cofactor.

It catalyses the reaction 2 a quinone + NADH + H(+) = 2 a 1,4-benzosemiquinone + NAD(+). The catalysed reaction is N,N-dimethyl-1,4-phenylenediamine + anthranilate + 2 NAD(+) = 2-(4-dimethylaminophenyl)diazenylbenzoate + 2 NADH + 2 H(+). In terms of biological role, quinone reductase that provides resistance to thiol-specific stress caused by electrophilic quinones. Also exhibits azoreductase activity. Catalyzes the reductive cleavage of the azo bond in aromatic azo compounds to the corresponding amines. The polypeptide is FMN-dependent NADH:quinone oxidoreductase (Rhizobium johnstonii (strain DSM 114642 / LMG 32736 / 3841) (Rhizobium leguminosarum bv. viciae)).